Consider the following 173-residue polypeptide: Small ribosomal subunit protein uS5 (173 aa).

The S5 DRBM domain occupies 17–80 (WQERVIQIRR…ADGKKQLIDV (64 aa)).

This sequence belongs to the universal ribosomal protein uS5 family. In terms of assembly, part of the 30S ribosomal subunit. Contacts proteins S4 and S8.

Functionally, with S4 and S12 plays an important role in translational accuracy. Its function is as follows. Located at the back of the 30S subunit body where it stabilizes the conformation of the head with respect to the body. This chain is Small ribosomal subunit protein uS5, found in Rippkaea orientalis (strain PCC 8801 / RF-1) (Cyanothece sp. (strain PCC 8801)).